A 1030-amino-acid polypeptide reads, in one-letter code: Calcium-transporting ATPase 4, plasma membrane-type (1030 aa).

Over 1–157 the chain is Cytoplasmic; sequence MSNLLRDFEV…NRYTEKPARS (157 aa). Positions 19–30 are interaction with calmodulin; that stretch reads ARQRWRSSVSIV. Position 28 is a phosphoserine (Ser28). The helical transmembrane segment at 158 to 178 threads the bilayer; sequence FLMFVWEALHDITLIILMVCA. The Lumenal portion of the chain corresponds to 179-196; that stretch reads VVSIGVGVATEGFPRGMY. A helical membrane pass occupies residues 197 to 217; sequence DGTGILLSILLVVMVTAISDY. Over 218–345 the chain is Cytoplasmic; it reads KQSLQFRDLD…EDETPLQVKL (128 aa). The chain crosses the membrane as a helical span at residues 346-365; it reads NGVATIIGKIGLSFAVLTFV. The Lumenal segment spans residues 366–395; sequence VLCIRFVLDKATSGSFTNWSSEDALTLLDY. Residues 396–413 traverse the membrane as a helical segment; the sequence is FAISVTIIVVAVPEGLPL. Residues 414-804 are Cytoplasmic-facing; the sequence is AVTLSLAFAM…RWGRAVYINI (391 aa). Asp451 serves as the catalytic 4-aspartylphosphate intermediate. Residues Asp749 and Asp753 each contribute to the Mg(2+) site. Residues 805–823 form a helical membrane-spanning segment; the sequence is QKFVQFQLTVNVVALIINF. Over 824–834 the chain is Lumenal; the sequence is VSACITGSAPL. The helical transmembrane segment at 835 to 855 threads the bilayer; it reads TAVQLLWVNMIMDTLGALALA. Residues 856 to 875 lie on the Cytoplasmic side of the membrane; it reads TEPPNEGLMKRAPIARTASF. Residues 876–898 form a helical membrane-spanning segment; that stretch reads ITKTMWRNIAGQSVYQLIVLGIL. Over 899–910 the chain is Lumenal; it reads NFAGKSLLKLDG. Residues 911–932 form a helical membrane-spanning segment; that stretch reads PDSTAVLNTVIFNSFVFCQVFN. Residues 933–950 are Cytoplasmic-facing; it reads EINSREIEKINVFKGMFN. A helical membrane pass occupies residues 951-972; it reads SWVFTWVMTVTVVFQVIIVEFL. The Lumenal segment spans residues 973 to 982; it reads GAFASTVPLS. The chain crosses the membrane as a helical span at residues 983-1004; that stretch reads WQHWLLSILIGSLNMIVAVILK. Over 1005–1030 the chain is Cytoplasmic; sequence CVPVESRHHHDGYDLLPSGPSSSNSA.

Belongs to the cation transport ATPase (P-type) (TC 3.A.3) family. Type IIB subfamily.

It is found in the vacuole membrane. The enzyme catalyses Ca(2+)(in) + ATP + H2O = Ca(2+)(out) + ADP + phosphate + H(+). Its activity is regulated as follows. Activated by calmodulin. Its function is as follows. This magnesium-dependent enzyme catalyzes the hydrolysis of ATP coupled with the translocation of calcium from the cytosol into small vacuoles. This Arabidopsis thaliana (Mouse-ear cress) protein is Calcium-transporting ATPase 4, plasma membrane-type (ACA4).